A 312-amino-acid polypeptide reads, in one-letter code: Large ribosomal subunit protein uL10 (312 aa).

Residues 287–312 (AAAAPAAKKEEPKEESDDDMGFGLFD) form a disordered region.

This sequence belongs to the universal ribosomal protein uL10 family. P0 forms a pentameric complex by interaction with dimers of P1 and P2. In terms of processing, phosphorylated.

In terms of biological role, ribosomal protein P0 is the functional equivalent of E.coli protein L10. This is Large ribosomal subunit protein uL10 from Caenorhabditis elegans.